The primary structure comprises 269 residues: 4-hydroxy-tetrahydrodipicolinate reductase (269 aa).

NAD(+) contacts are provided by residues 8–13 and Glu34; that span reads GAAGRM. Position 35 (Arg35) interacts with NADP(+). Residues 98-100 and 122-125 each bind NAD(+); these read GTT and APNY. Catalysis depends on His155, which acts as the Proton donor/acceptor. His156 provides a ligand contact to (S)-2,3,4,5-tetrahydrodipicolinate. Catalysis depends on Lys159, which acts as the Proton donor. 165-166 serves as a coordination point for (S)-2,3,4,5-tetrahydrodipicolinate; that stretch reads GT.

Belongs to the DapB family.

It localises to the cytoplasm. The catalysed reaction is (S)-2,3,4,5-tetrahydrodipicolinate + NAD(+) + H2O = (2S,4S)-4-hydroxy-2,3,4,5-tetrahydrodipicolinate + NADH + H(+). The enzyme catalyses (S)-2,3,4,5-tetrahydrodipicolinate + NADP(+) + H2O = (2S,4S)-4-hydroxy-2,3,4,5-tetrahydrodipicolinate + NADPH + H(+). It participates in amino-acid biosynthesis; L-lysine biosynthesis via DAP pathway; (S)-tetrahydrodipicolinate from L-aspartate: step 4/4. In terms of biological role, catalyzes the conversion of 4-hydroxy-tetrahydrodipicolinate (HTPA) to tetrahydrodipicolinate. The protein is 4-hydroxy-tetrahydrodipicolinate reductase of Aliivibrio fischeri (strain ATCC 700601 / ES114) (Vibrio fischeri).